A 153-amino-acid chain; its full sequence is Late embryogenesis abundant protein B19.4 (153 aa).

The interval 1–153 is disordered; that stretch reads MASGQQERSE…IDESKFKTKS (153 aa). 3 stretches are compositionally biased toward basic and acidic residues: residues 7–19, 32–122, and 133–153; these read ERSE…REGE, EAQE…EMGR, and GGER…KTKS. Repeat copies occupy residues 43-62, 63-82, 83-102, and 103-122. The tract at residues 43 to 122 is 4 X 20 AA tandem repeats; sequence RGGQTRKEQL…GEEGYREMGR (80 aa).

Belongs to the small hydrophilic plant seed protein family.

Functionally, lea proteins are late embryonic proteins abundant in higher plant seed embryos. This Hordeum vulgare (Barley) protein is Late embryogenesis abundant protein B19.4 (B19.4).